A 397-amino-acid chain; its full sequence is MTSASQAAPVALPVMPDAEDARIMAKAALFAPPPSVMEDGRKDLVGLSREQLTEALAEIGFPAFRAKQLWHWIYHRGETDFRVMSSIAKPQQETLAERFVISRPAVTECLTSVDETRKWLFRFRDGQEAETVYIPDPVEDRGAVCISSQVGCTLSCRFCHTGTQPLVRNLGPAEIVGQFMAARDAYGEWPSPKGETPRLLSTIVLMGMGEPLYNYENVKQAMRIVMDGDGIALSRRRITLSTSGVVPMMDRCGTELAVNLAISLHAVTDELRDELVPLNRKYPIRELIAACRRYPAASNARRITFEYIMLDGINDSEAEARELVRLIAGIPAKVNLIPFNPWPGSQYTPSRPKALERFSRIVMEAGFASPIRTPRGRDILAACGQLRTESRKERRID.

The active-site Proton acceptor is the glutamate 130. The Radical SAM core domain maps to valine 138–arginine 377. A disulfide bridge links cysteine 145 with cysteine 383. The [4Fe-4S] cluster site is built by cysteine 152, cysteine 156, and cysteine 159. S-adenosyl-L-methionine contacts are provided by residues glycine 209–glutamate 210, serine 241, serine 263–histidine 265, and asparagine 340. The active-site S-methylcysteine intermediate is the cysteine 383.

Belongs to the radical SAM superfamily. RlmN family. The cofactor is [4Fe-4S] cluster.

Its subcellular location is the cytoplasm. It carries out the reaction adenosine(2503) in 23S rRNA + 2 reduced [2Fe-2S]-[ferredoxin] + 2 S-adenosyl-L-methionine = 2-methyladenosine(2503) in 23S rRNA + 5'-deoxyadenosine + L-methionine + 2 oxidized [2Fe-2S]-[ferredoxin] + S-adenosyl-L-homocysteine. The enzyme catalyses adenosine(37) in tRNA + 2 reduced [2Fe-2S]-[ferredoxin] + 2 S-adenosyl-L-methionine = 2-methyladenosine(37) in tRNA + 5'-deoxyadenosine + L-methionine + 2 oxidized [2Fe-2S]-[ferredoxin] + S-adenosyl-L-homocysteine. Specifically methylates position 2 of adenine 2503 in 23S rRNA and position 2 of adenine 37 in tRNAs. m2A2503 modification seems to play a crucial role in the proofreading step occurring at the peptidyl transferase center and thus would serve to optimize ribosomal fidelity. The polypeptide is Dual-specificity RNA methyltransferase RlmN (Granulibacter bethesdensis (strain ATCC BAA-1260 / CGDNIH1)).